The following is a 397-amino-acid chain: Acetate kinase (397 aa).

A Mg(2+)-binding site is contributed by Asn-8. Residue Lys-15 coordinates ATP. Arg-89 lines the substrate pocket. Residue Asp-146 is the Proton donor/acceptor of the active site. ATP contacts are provided by residues 206–210 (HLGNG), 281–283 (DLR), and 329–333 (GIGEN). Glu-382 provides a ligand contact to Mg(2+).

It belongs to the acetokinase family. As to quaternary structure, homodimer. Requires Mg(2+) as cofactor. It depends on Mn(2+) as a cofactor.

It localises to the cytoplasm. The catalysed reaction is acetate + ATP = acetyl phosphate + ADP. Its pathway is metabolic intermediate biosynthesis; acetyl-CoA biosynthesis; acetyl-CoA from acetate: step 1/2. Functionally, catalyzes the formation of acetyl phosphate from acetate and ATP. Can also catalyze the reverse reaction. This Bacillus cytotoxicus (strain DSM 22905 / CIP 110041 / 391-98 / NVH 391-98) protein is Acetate kinase.